The sequence spans 682 residues: Glucan endo-1,3-beta-glucosidase A1 (682 aa).

The signal sequence occupies residues 1-38 (MKPSHFTEKRFMKKVLGLFLVVVMLASVGVLPTSKVQA). One can recognise a GH16 domain in the interval 391–682 (YTFIGNPNAP…VDYVRVYKEQ (292 aa)). Residue glutamate 552 is the Nucleophile of the active site. The Proton donor role is filled by glutamate 557.

It belongs to the glycosyl hydrolase 16 family.

Its subcellular location is the secreted. The enzyme catalyses Hydrolysis of (1-&gt;3)-beta-D-glucosidic linkages in (1-&gt;3)-beta-D-glucans.. Functionally, lysis of cellular walls containing beta-1,3-glucans. Implicated in the defense against fungal pathogens. In Niallia circulans (Bacillus circulans), this protein is Glucan endo-1,3-beta-glucosidase A1 (glcA).